The sequence spans 435 residues: Adenylosuccinate synthetase (435 aa).

Residues 17-23 and 45-47 each bind GTP; these read GDEGKGK and GHT. Residue Asp18 is the Proton acceptor of the active site. Mg(2+) is bound by residues Asp18 and Gly45. IMP is bound by residues 18 to 21, 43 to 46, Thr134, Arg148, Gln229, Thr244, and Arg308; these read DEGK and NAGH. The Proton donor role is filled by His46. Position 304–310 (304–310) interacts with substrate; it reads SVTGRPR. GTP-binding positions include Arg310, 336–338, and 418–420; these read KLD and STG.

It belongs to the adenylosuccinate synthetase family. Homodimer. Requires Mg(2+) as cofactor.

The protein resides in the cytoplasm. It catalyses the reaction IMP + L-aspartate + GTP = N(6)-(1,2-dicarboxyethyl)-AMP + GDP + phosphate + 2 H(+). The protein operates within purine metabolism; AMP biosynthesis via de novo pathway; AMP from IMP: step 1/2. Functionally, plays an important role in the de novo pathway of purine nucleotide biosynthesis. Catalyzes the first committed step in the biosynthesis of AMP from IMP. This chain is Adenylosuccinate synthetase, found in Bordetella pertussis (strain Tohama I / ATCC BAA-589 / NCTC 13251).